The sequence spans 552 residues: ATP synthase subunit alpha (552 aa).

Residue 173-180 (GDRQTGKT) coordinates ATP. Residues 526–552 (ASPLDPSAVRKESIPVHRAPARTDDEG) form a disordered region. The segment covering 533–552 (AVRKESIPVHRAPARTDDEG) has biased composition (basic and acidic residues).

Belongs to the ATPase alpha/beta chains family. In terms of assembly, F-type ATPases have 2 components, CF(1) - the catalytic core - and CF(0) - the membrane proton channel. CF(1) has five subunits: alpha(3), beta(3), gamma(1), delta(1), epsilon(1). CF(0) has three main subunits: a(1), b(2) and c(9-12). The alpha and beta chains form an alternating ring which encloses part of the gamma chain. CF(1) is attached to CF(0) by a central stalk formed by the gamma and epsilon chains, while a peripheral stalk is formed by the delta and b chains.

It localises to the cell membrane. The enzyme catalyses ATP + H2O + 4 H(+)(in) = ADP + phosphate + 5 H(+)(out). Functionally, produces ATP from ADP in the presence of a proton gradient across the membrane. The alpha chain is a regulatory subunit. In Frankia alni (strain DSM 45986 / CECT 9034 / ACN14a), this protein is ATP synthase subunit alpha.